A 1221-amino-acid chain; its full sequence is Probable serine/threonine-protein kinase DDB_G0286465 (1221 aa).

Disordered regions lie at residues 1 to 37, 104 to 133, and 173 to 263; these read MTLR…SPYT, FSPS…NDNQ, and ENNS…NNNE. Composition is skewed to low complexity over residues 24-37, 112-127, 173-192, and 204-263; these read SSVS…SPYT, KNNN…NNNY, ENNS…NMQK, and NNNN…NNNE. The Protein kinase domain maps to 186–627; sequence INNNMQKTGG…PYKLLDHPFF (442 aa). Residue 192 to 200 participates in ATP binding; the sequence is KTGGRNGSV. K271 is a binding site for ATP. The segment covering 324–344 has biased composition (low complexity); it reads NVNNNNSNNNNNNSNNNITNS. Positions 324-346 are disordered; that stretch reads NVNNNNSNNNNNNSNNNITNSRY. The Proton acceptor role is filled by D448. Composition is skewed to low complexity over residues 538-550 and 559-584; these read SPSS…TSTS and DSSS…SLPK. Disordered regions lie at residues 538-604, 712-782, 823-858, 959-1008, and 1105-1152; these read SPSS…PEKR, PNLS…KEKL, KFEK…PPLP, KENI…SYCN, and KKQE…QQEK. A compositionally biased stretch (basic and acidic residues) spans 591–604; the sequence is RSKDNQSKLDPEKR. Positions 725-738 are enriched in low complexity; that stretch reads KKQLQQYQQQQKQQ. Over residues 746–756 the composition is skewed to acidic residues; the sequence is DDEEEKEEEEK. 2 stretches are compositionally biased toward basic and acidic residues: residues 757–769 and 823–850; these read EKEK…KEKE and KFEK…KDDA. Low complexity predominate over residues 959–993; that stretch reads KENIINFHNNNNNNNNNNNNNNNNNNNNNNNNNNN.

This sequence belongs to the protein kinase superfamily. Ser/Thr protein kinase family.

It catalyses the reaction L-seryl-[protein] + ATP = O-phospho-L-seryl-[protein] + ADP + H(+). The catalysed reaction is L-threonyl-[protein] + ATP = O-phospho-L-threonyl-[protein] + ADP + H(+). The chain is Probable serine/threonine-protein kinase DDB_G0286465 from Dictyostelium discoideum (Social amoeba).